The primary structure comprises 375 residues: Sperm microtubule associated protein 2 (375 aa).

A disordered region spans residues 1–78 (MGELGEHRAS…MAGEELPETS (78 aa)). The segment covering 59-75 (EPEEEIPPEEMAGEELP) has biased composition (acidic residues). THEG repeat units follow at residues 110-129 (AKGRKKRSRRLLELAKPKTN), 176-195 (TITVPVVSQRMEELSRPKRF), 214-233 (STLEYQASNRLKQLATPKVR), 250-269 (AAQMAVPTPRTLRLAKPRPP), 282-301 (PKPYVSDYNRLLQLATPKAL), 318-337 (VTKNAVASSRIISLAQPKIR), and 352-371 (ASLVAQASPRIYELATPKYI). Ser287 is subject to Phosphoserine.

Interacts with CCT5. Testis specific (at protein level). Specifically expressed in spermatids; Sertoli cells maintain the level of expression in spermatids. If isolated spermatids are cultivated for 16 hours alone, the expression of THEG is down-regulated. May require signals from Sertoli cells to initiate changes in its gene expression through spermatogenesis.

It is found in the nucleus. In terms of biological role, may be involved (but not essential) in spermatogenesis. The sequence is that of Sperm microtubule associated protein 2 from Mus musculus (Mouse).